Reading from the N-terminus, the 1254-residue chain is Structural polyprotein (1254 aa).

Residues 1–33 (MFPFQPMYPMQPMPYRNPFAAPRRPWFPRTDPF) are necessary for nucleocapsid assembly and virus assembly. Residues 33 to 68 (FLAMQVQELTRSMANLTFKQRRGAPPEGPPAKKSKR) form a host transcription inhibition region. A Supraphysiological nuclear export signal motif is present at residues 41-48 (LTRSMANL). N-linked (GlcNAc...) asparagine; by host glycosylation is present at Asn-47. A disordered region spans residues 48–118 (LTFKQRRGAP…KKPGKRQRMV (71 aa)). Positions 64–68 (KKSKR) match the Nuclear localization signal motif. Basic residues predominate over residues 76 to 91 (GGQRKKKKNEGKKKAK). The binding to the viral RNA stretch occupies residues 90–126 (AKTGPPNLKTQNGNKKKTNKKPGKRQRMVMKLESDKT). Thr-92 and Thr-107 each carry phosphothreonine. The segment covering 103 to 117 (NKKKTNKKPGKRQRM) has biased composition (basic residues). The ribosome-binding stretch occupies residues 111–125 (PGKRQRMVMKLESDK). Ser-123 carries the post-translational modification Phosphoserine. Residues 125-274 (KTFPIMLEGK…KYTPENCEQW (150 aa)) enclose the Peptidase S3 domain. Thr-126 is subject to Phosphothreonine. His-151 acts as the Charge relay system in catalysis. Residues 167 to 172 (KKASKY) form an interaction with spike glycoprotein E2 region. Active-site charge relay system residues include Asp-173 and Ser-225. Positions 259–263 (EKGVT) are interaction with spike glycoprotein E2. The interval 275–286 (SLVTTMCLLANV) is functions as an uncleaved signal peptide for the precursor of protein E3/E2. The Extracellular portion of the chain corresponds to 275–702 (SLVTTMCLLA…YHRYPMSTIT (428 aa)). Disulfide bonds link Cys-281/Cys-290, Cys-352/Cys-456, Cys-355/Cys-360, Cys-423/Cys-437, Cys-484/Cys-599, Cys-533/Cys-559, and Cys-535/Cys-553. A glycan (N-linked (GlcNAc...) asparagine; by host) is linked at Asn-285. Residues Asn-545 and Asn-651 are each glycosylated (N-linked (GlcNAc...) asparagine; by host). Residues 703-723 (GLSICAAIVAVSIAASTWLLC) form a helical membrane-spanning segment. The tract at residues 724–728 (RSRAS) is interaction with the capsid protein. Topologically, residues 724-756 (RSRASCLTPYRLTPNAKMPLCLAVLCCARSARA) are cytoplasmic. Residues Cys-729, Cys-749, and Cys-750 are each lipidated (S-palmitoyl cysteine; by host). An intrachain disulfide couples Cys-729 to Cys-750. The transient transmembrane before p62-6K protein processing stretch occupies residues 735–754 (LTPNAKMPLCLAVLCCARSA). Over 757 to 768 (ETTWESLDHLWN) the chain is Extracellular. Residues 769–789 (NNQQMFWTQLLIPLAALIVVT) traverse the membrane as a helical segment. Position 790 (Arg-790) is a topological domain, cytoplasmic. The helical transmembrane segment at 791 to 811 (LLKCMCCVVPFLVVAGAAGAG) threads the bilayer. At 812–1224 (AYEHATTMPN…SKTAWTWLTS (413 aa)) the chain is on the extracellular side. Cystine bridges form between Cys-861–Cys-926, Cys-874–Cys-906, Cys-875–Cys-908, and Cys-880–Cys-890. Residues 896 to 913 (VYPFMWGGAYCFCDTENT) are E1 fusion peptide loop. Asn-946 and Asn-1082 each carry an N-linked (GlcNAc...) asparagine; by host glycan. 4 cysteine pairs are disulfide-bonded: Cys-1071/Cys-1083, Cys-1113/Cys-1188, Cys-1118/Cys-1192, and Cys-1140/Cys-1182. Residues 1225–1245 (LLGGSAVIIIIGLVLATLVAM) form a helical membrane-spanning segment. Residues 1246–1254 (YVLTNQKHN) are Cytoplasmic-facing.

As to quaternary structure, homodimer. Homomultimer. Interacts with host karyopherin KPNA4; this interaction allows the nuclear import of the viral capsid protein. Interacts with spike glycoprotein E2. Interacts with host IRAK1; the interaction leads to inhibition of IRAK1-dependent signaling. Part of a tetrameric complex composed of host CRM1, host importin alpha/beta dimer and the viral capsid; this complex blocks the receptor-mediated transport through the nuclear pore. Interacts with host phosphatase PPP1CA; this interaction dephosphorylates the capsid protein, which increases its ability to bind to the viral genome. In terms of assembly, the precursor of protein E3/E2 and E1 form a heterodimer shortly after synthesis. Interacts with spike glycoprotein E2. The precursor of protein E3/E2 and E1 form a heterodimer shortly after synthesis. Processing of the precursor of protein E3/E2 into E2 and E3 results in a heterodimer of the spike glycoproteins E2 and E1. Spike at virion surface are constituted of three E2-E1 heterodimers. After target cell attachment and endocytosis, E1 change conformation to form homotrimers. Interacts with 6K protein. Interacts with host LDLRAD3; this interaction mediates viral entry to the host cell. As to quaternary structure, interacts with spike glycoprotein E1. Processing of the precursor of protein E3/E2 into E2 and E3 results in a heterodimer of the spike glycoproteins E2 and E1. Spike at virion surface are constituted of a trimer of E2-E1 heterodimers. Interacts with 6K protein. Interacts with host LDLRAD3; this interaction mediates viral entry to the host cell. In terms of assembly, oligomer. Interacts with spike glycoprotein E1. Interacts with spike glycoprotein E2. Post-translationally, structural polyprotein: Specific enzymatic cleavages in vivo yield mature proteins. Capsid protein is auto-cleaved during polyprotein translation, unmasking a signal peptide at the N-terminus of the precursor of E3/E2. The remaining polyprotein is then targeted to the host endoplasmic reticulum, where host signal peptidase cleaves it into pE2, 6K and E1 proteins. pE2 is further processed to mature E3 and E2 by host furin in trans-Golgi vesicle. Phosphorylated on serine and threonine residues. In terms of processing, palmitoylated via thioester bonds. These palmitoylations may induce disruption of the C-terminus transmembrane. This would result in the reorientation of E2 C-terminus from lumenal to cytoplasmic side. Post-translationally, N-glycosylated. Palmitoylated via thioester bonds.

Its subcellular location is the virion. The protein resides in the host cytoplasm. It is found in the host cell membrane. The protein localises to the host nucleus. It localises to the virion membrane. Its subcellular location is the host Golgi apparatus. The protein resides in the host trans-Golgi network. It is found in the host endoplasmic reticulum. The catalysed reaction is Autocatalytic release of the core protein from the N-terminus of the togavirus structural polyprotein by hydrolysis of a -Trp-|-Ser- bond.. Its function is as follows. Forms an icosahedral capsid with a T=4 symmetry composed of 240 copies of the capsid protein surrounded by a lipid membrane through which penetrate 80 spikes composed of trimers of E1-E2 heterodimers. The capsid protein binds to the viral RNA genome at a site adjacent to a ribosome binding site for viral genome translation following genome release. Possesses a protease activity that results in its autocatalytic cleavage from the nascent structural protein. Following its self-cleavage, the capsid protein transiently associates with ribosomes, and within several minutes the protein binds to viral RNA and rapidly assembles into icosahedric core particles. The resulting nucleocapsid eventually associates with the cytoplasmic domain of the spike glycoprotein E2 at the cell membrane, leading to budding and formation of mature virions. In case of infection, new virions attach to target cells and after clathrin-mediated endocytosis their membrane fuses with the host endosomal membrane. This leads to the release of the nucleocapsid into the cytoplasm, followed by an uncoating event necessary for the genomic RNA to become accessible. The uncoating might be triggered by the interaction of capsid proteins with ribosomes. Binding of ribosomes would release the genomic RNA since the same region is genomic RNA-binding and ribosome-binding. Specifically inhibits interleukin-1 receptor-associated kinase 1/IRAK1-dependent signaling during viral entry, representing a means by which the alphaviruses may evade innate immune detection and activation prior to viral gene expression. Inhibits host transcription. Forms a tetrameric complex with XPO1/CRM1 and the nuclear import receptor importin. This complex blocks the central channel of host nuclear pores thereby inhibiting the receptor-mediated nuclear transport and thus the host mRNA and rRNA transcription. The inhibition of transcription is linked to a cytopathic effect on the host cell. In terms of biological role, provides the signal sequence for the translocation of the precursor of protein E3/E2 to the host endoplasmic reticulum. Furin-cleaved E3 remains associated with spike glycoprotein E1 and mediates pH protection of the latter during the transport via the secretory pathway. After virion release from the host cell, the assembly protein E3 is gradually released in the extracellular space. Plays a role in viral attachment to target host cell, by binding to the cell receptor LDLRAD3. Synthesized as a p62 precursor which is processed by furin at the cell membrane just before virion budding, giving rise to E2-E1 heterodimer. The p62-E1 heterodimer is stable, whereas E2-E1 is unstable and dissociate at low pH. p62 is processed at the last step, presumably to avoid E1 fusion activation before its final export to cell surface. E2 C-terminus contains a transitory transmembrane that would be disrupted by palmitoylation, resulting in reorientation of the C-terminal tail from lumenal to cytoplasmic side. This step is critical since E2 C-terminus is involved in budding by interacting with capsid proteins. This release of E2 C-terminus in cytoplasm occurs lately in protein export, and precludes premature assembly of particles at the endoplasmic reticulum membrane. Functionally, acts as a viroporin that participates in virus glycoprotein processing and transport to the plasma membrane, cell permeabilization and budding of viral particles. Disrupts the calcium homeostasis of the cell, probably at the endoplasmic reticulum level. This leads to cytoplasmic calcium elevation. Because of its lipophilic properties, the 6K protein is postulated to influence the selection of lipids that interact with the transmembrane domains of the glycoproteins, which, in turn, affects the deformability of the bilayer required for the extreme curvature that occurs as budding proceeds. Present in low amount in virions, about 3% compared to viral glycoproteins. Its function is as follows. Class II viral fusion protein. Fusion activity is inactive as long as E1 is bound to E2 in mature virion. After virus attachment to cell receptor LDLRAD3 and endocytosis, acidification of the endosome induce dissociation of E1/E2 heterodimer and concomitant trimerization of the E1 subunits. This E1 trimer is fusion active, and promotes release of viral nucleocapsid in cytoplasm after endosome and viral membrane fusion. Efficient fusion requires the presence of cholesterol and sphingolipid in the target membrane. In Venezuelan equine encephalitis virus (strain Everglades Fe3-7c) (VEEV), this protein is Structural polyprotein.